Consider the following 229-residue polypeptide: NAD(P)H-hydrate epimerase (229 aa).

Positions A9–L216 constitute a YjeF N-terminal domain. A (6S)-NADPHX-binding site is contributed by N59–D63. N60 and D124 together coordinate K(+). Residues G128–P134 and D157 contribute to the (6S)-NADPHX site. K(+) is bound at residue S160.

The protein belongs to the NnrE/AIBP family. The cofactor is K(+).

The catalysed reaction is (6R)-NADHX = (6S)-NADHX. The enzyme catalyses (6R)-NADPHX = (6S)-NADPHX. Catalyzes the epimerization of the S- and R-forms of NAD(P)HX, a damaged form of NAD(P)H that is a result of enzymatic or heat-dependent hydration. This is a prerequisite for the S-specific NAD(P)H-hydrate dehydratase to allow the repair of both epimers of NAD(P)HX. The sequence is that of NAD(P)H-hydrate epimerase from Anopheles gambiae (African malaria mosquito).